The primary structure comprises 198 residues: Large ribosomal subunit protein bL27c (198 aa).

A chloroplast-targeting transit peptide spans 1-58; that stretch reads MAMATSMSLNLIGAFKGLSLSSTSSFLRGDLSFSPKTSFTVTLPLENLQAPIPLTIES.

This sequence belongs to the bacterial ribosomal protein bL27 family. As to quaternary structure, part of the 50S ribosomal subunit.

The protein resides in the plastid. It is found in the chloroplast. The polypeptide is Large ribosomal subunit protein bL27c (RPL27) (Arabidopsis thaliana (Mouse-ear cress)).